Here is a 363-residue protein sequence, read N- to C-terminus: tRNA-specific 2-thiouridylase MnmA (363 aa).

ATP-binding positions include 6-13 (AMSGGVDS) and L32. C101 (nucleophile) is an active-site residue. An intrachain disulfide couples C101 to C193. G125 is a binding site for ATP. The interval 143-145 (KDQ) is interaction with tRNA. C193 serves as the catalytic Cysteine persulfide intermediate.

Belongs to the MnmA/TRMU family.

The protein localises to the cytoplasm. It catalyses the reaction S-sulfanyl-L-cysteinyl-[protein] + uridine(34) in tRNA + AH2 + ATP = 2-thiouridine(34) in tRNA + L-cysteinyl-[protein] + A + AMP + diphosphate + H(+). Its function is as follows. Catalyzes the 2-thiolation of uridine at the wobble position (U34) of tRNA, leading to the formation of s(2)U34. The sequence is that of tRNA-specific 2-thiouridylase MnmA from Mycobacterium marinum (strain ATCC BAA-535 / M).